The primary structure comprises 314 residues: DNA-directed RNA polymerase subunit alpha (314 aa).

Residues 1–228 (MIEIEKPKIE…EHLNIFVGLT (228 aa)) form an alpha N-terminal domain (alpha-NTD) region. An alpha C-terminal domain (alpha-CTD) region spans residues 245–314 (KEKVLEMTIE…ELGLSLRKDD (70 aa)).

This sequence belongs to the RNA polymerase alpha chain family. In terms of assembly, homodimer. The RNAP catalytic core consists of 2 alpha, 1 beta, 1 beta' and 1 omega subunit. When a sigma factor is associated with the core the holoenzyme is formed, which can initiate transcription.

It carries out the reaction RNA(n) + a ribonucleoside 5'-triphosphate = RNA(n+1) + diphosphate. DNA-dependent RNA polymerase catalyzes the transcription of DNA into RNA using the four ribonucleoside triphosphates as substrates. The protein is DNA-directed RNA polymerase subunit alpha of Geobacillus thermodenitrificans (strain NG80-2).